Reading from the N-terminus, the 426-residue chain is Mediator of RNA polymerase II transcription subunit 1 (426 aa).

The segment at V324–T356 is disordered. Residues L336–R347 show a composition bias toward basic residues.

The protein belongs to the Mediator complex subunit 1 family. In terms of assembly, component of the Mediator complex.

It is found in the nucleus. Component of the Mediator complex, a coactivator involved in the regulated transcription of nearly all RNA polymerase II-dependent genes. Mediator functions as a bridge to convey information from gene-specific regulatory proteins to the basal RNA polymerase II transcription machinery. Mediator is recruited to promoters by direct interactions with regulatory proteins and serves as a scaffold for the assembly of a functional preinitiation complex with RNA polymerase II and the general transcription factors. This chain is Mediator of RNA polymerase II transcription subunit 1 (MED1), found in Eremothecium gossypii (strain ATCC 10895 / CBS 109.51 / FGSC 9923 / NRRL Y-1056) (Yeast).